We begin with the raw amino-acid sequence, 224 residues long: PKHD-type hydroxylase KPN78578_12210 (224 aa).

Positions 77–176 constitute a Fe2OG dioxygenase domain; the sequence is TISAPLFNRY…RQASFLWIQS (100 aa). The Fe cation site is built by histidine 95, aspartate 97, and histidine 157. Residue arginine 167 coordinates 2-oxoglutarate.

Fe(2+) is required as a cofactor. L-ascorbate serves as cofactor.

This Klebsiella pneumoniae subsp. pneumoniae (strain ATCC 700721 / MGH 78578) protein is PKHD-type hydroxylase KPN78578_12210.